Consider the following 281-residue polypeptide: 3'-5' exonuclease Snipper (281 aa).

A disordered region spans residues 19–52; the sequence is DGARPDPNNDPEESFNEDEVTEANSVPAKSKKSR. Over residues 27–39 the composition is skewed to acidic residues; that stretch reads NDPEESFNEDEVT. Positions 64–262 constitute an Exonuclease domain; the sequence is YVIAVDFEAT…MCKMVRDGAL (199 aa). D69 and E71 together coordinate Mg(2+). E71 (proton acceptor) is an active-site residue. AMP-binding residues include E71 and A72. D183 is a binding site for Mg(2+). The active-site Proton acceptor is H240. Residue H240 coordinates AMP. D245 contacts Mg(2+).

The protein belongs to the ERI2 family. Mg(2+) is required as a cofactor.

Its subcellular location is the cytoplasm. It is found in the nucleus. The protein resides in the nucleolus. A broad-specificity exonuclease, capable of degrading both structure-specific DNA and RNA targets without sequence specificity in vitro. Requires two to five unpaired nucleotides in the 3' region for efficient binding and nuclease activity. Binds with higher affinity to RNA and DNA stem-loop substrates compared to single-stranded substrate. Binds to the 3'-end of histone mRNAs and degrades them, suggesting that it might play a role in histone mRNA decay after replication. Can readily cleave the histone stem-loop RNA beyond the -12 (UUU) position in the loop to produce -14 and then -16 oligonucleotide fragments for both the stem-loop and the reverse stem-loop. Cleaves both the single-stranded 3' flank as well as the double-stranded stem portion of histone stem-loop RNA. Might affect histone mRNA 3' processing thereby regulating histone protein expression. Has an important role in development and tissue formation. Might have a role in 5.8S rRNA precursor processing. The protein is 3'-5' exonuclease Snipper of Drosophila melanogaster (Fruit fly).